The chain runs to 702 residues: Ribosomal RNA large subunit methyltransferase K/L (702 aa).

One can recognise a THUMP domain in the interval 43 to 154 (LIYQSLMWSR…KETASIALDL (112 aa)).

This sequence belongs to the methyltransferase superfamily. RlmKL family.

Its subcellular location is the cytoplasm. It catalyses the reaction guanosine(2445) in 23S rRNA + S-adenosyl-L-methionine = N(2)-methylguanosine(2445) in 23S rRNA + S-adenosyl-L-homocysteine + H(+). The catalysed reaction is guanosine(2069) in 23S rRNA + S-adenosyl-L-methionine = N(2)-methylguanosine(2069) in 23S rRNA + S-adenosyl-L-homocysteine + H(+). In terms of biological role, specifically methylates the guanine in position 2445 (m2G2445) and the guanine in position 2069 (m7G2069) of 23S rRNA. This is Ribosomal RNA large subunit methyltransferase K/L from Salmonella choleraesuis (strain SC-B67).